The primary structure comprises 525 residues: D-arabinono-1,4-lactone oxidase (525 aa).

The 175-residue stretch at 23–197 (YSCRPQLYFQ…VKATIRVIPE (175 aa)) folds into the FAD-binding PCMH-type domain. H60 is subject to Pros-8alpha-FAD histidine.

Belongs to the oxygen-dependent FAD-linked oxidoreductase family. It depends on FAD as a cofactor.

It is found in the mitochondrion membrane. It catalyses the reaction D-arabinono-1,4-lactone + O2 = dehydro-D-arabinono-1,4-lactone + H2O2 + H(+). It functions in the pathway cofactor biosynthesis; D-erythroascorbate biosynthesis; dehydro-D-arabinono-1,4-lactone from D-arabinose: step 2/2. The sequence is that of D-arabinono-1,4-lactone oxidase (ALO1) from Kluyveromyces lactis (strain ATCC 8585 / CBS 2359 / DSM 70799 / NBRC 1267 / NRRL Y-1140 / WM37) (Yeast).